Consider the following 485-residue polypeptide: Sulfated surface glycoprotein 185 (485 aa).

A signal peptide spans 1–20; that stretch reads MSKLLLVALFGAIAVVATSA. Asparagine 193 carries N-linked (GlcNAc...) asparagine glycosylation. The tract at residues 212–317 is disordered; it reads LSGPNVNPIG…PPVPPPPSPP (106 aa). Composition is skewed to pro residues over residues 221 to 234 and 241 to 317; these read GPAPNNSPLPPSPQ and PPSP…PSPP. N-linked (GlcNAc...) asparagine glycosylation is present at asparagine 347.

As to quaternary structure, polymer. Intersubunit cross-links are formed between saccharide chains rather than between polypeptide chains. Post-translationally, hydroxylated on proline residues in the Pro-rich central domain. In terms of processing, glycosylated; contains sulfate-substituted glycans.

Its function is as follows. The extracellular matrix (ECM) of Volvox contains insoluble fibrous layers that surround individual cells at a distance to form contiguous cellular compartments. SSG 185 is the monomeric precursor of this substructure (C3Z structure). The polypeptide is Sulfated surface glycoprotein 185 (Volvox carteri (Green alga)).